A 120-amino-acid chain; its full sequence is uncharacterized protein (120 aa).

A run of 2 helical transmembrane segments spans residues 26–46 (PSTSLTIMLSVIAIRILPAGM) and 57–77 (LLFASFLLLSSFHYPITLTLV).

It localises to the membrane. This is an uncharacterized protein from Saccharomyces cerevisiae (strain ATCC 204508 / S288c) (Baker's yeast).